The sequence spans 555 residues: Beta-fructofuranosidase, cell wall isozyme (555 aa).

Positions 1–22 (MAISSIFLLSLFSLIYVIPIEA) are cleaved as a signal peptide. Substrate is bound by residues 58-61 (WIND), glutamine 77, tryptophan 85, and 120-121 (WS). The active site involves aspartate 61. Aspartate 140 is a catalytic residue. 2 N-linked (GlcNAc...) asparagine glycosylation sites follow: asparagine 154 and asparagine 181. Residues 186–187 (RD), glutamate 241, and aspartate 277 each bind substrate. Residue asparagine 337 is glycosylated (N-linked (GlcNAc...) asparagine). A disulfide bond links cysteine 435 and cysteine 481.

The protein belongs to the glycosyl hydrolase 32 family.

It catalyses the reaction Hydrolysis of terminal non-reducing beta-D-fructofuranoside residues in beta-D-fructofuranosides.. This Pisum sativum (Garden pea) protein is Beta-fructofuranosidase, cell wall isozyme (BFRUCT1).